Here is a 648-residue protein sequence, read N- to C-terminus: Leucine-rich repeat and WD repeat-containing protein 1 (648 aa).

LRR repeat units lie at residues 22 to 43 (KIQS…PNLL), 48 to 69 (KLRE…LGLS), 70 to 91 (HLRI…HQFP), and 92 to 113 (ELEE…LKVS). The disordered stretch occupies residues 214–262 (VEHPQAAGASKFRAREVASKRPGKDPVTLPPSKRVRALPPAQAEGSPMG). Residues 226 to 237 (RAREVASKRPGK) show a composition bias toward basic and acidic residues. Residue Ser259 is modified to Phosphoserine. WD repeat units follow at residues 392 to 432 (AHKK…QDYK), 443 to 482 (CGSV…PQKQ), 497 to 536 (VSGQ…AGRG), 541 to 592 (LPVV…KEPP), and 616 to 648 (VTKT…WRRC).

This sequence belongs to the LRWD1 family. Integral component of the ORC complex. Directly interacts with CDT1, GMNN and ORC2. Interacts with ORC2 only when non-ubiquitinated; this interaction prevents LRWD1 ubiquitination and degradation. Some of these interactions are regulated in a cell-cycle dependent manner. Interaction with ORC1 occurs predominantly during G1. Association with phosphorylated ORC1 during mitosis is not efficient. Interaction with CDT1 occurs during G1 phase, as well as during mitosis with phosphorylated CDT1. Interaction with GMNN occurs from G1/S to mitosis. Interaction with ORC2 is observed throughout the cell cycle. The stoichiometry of the ORCA/ORC/CDT1/GMNN complex is 1:1:1:2. Interacts with CUL4A and DDB1; this interaction may lead to ubiquitination. In terms of processing, ubiquitinated; undergoes 'Lys-48'-linked polyubiquitination leading to proteasomal degradation. Ubiquitination occurs within the WD repeats at the end of the G1 phase. Ubiquitination may be catalyzed by the CUL4-DDB1 E3 ubiquitin-protein ligase complex and other E3 ligases. In terms of tissue distribution, testis-specific.

The protein localises to the nucleus. The protein resides in the chromosome. Its subcellular location is the centromere. It is found in the telomere. It localises to the cytoplasm. The protein localises to the cytoskeleton. The protein resides in the microtubule organizing center. Its subcellular location is the centrosome. It is found in the kinetochore. Its function is as follows. Required for G1/S transition. Recruits and stabilizes the origin recognition complex (ORC) onto chromatin during G1 to establish pre-replication complex (preRC) and to heterochromatic sites in post-replicated cells. Binds a combination of DNA and histone methylation repressive marks on heterochromatin. Binds histone H3 and H4 trimethylation marks H3K9me3, H3K27me3 and H4K20me3 in a cooperative manner with DNA methylation. Required for silencing of major satellite repeats. May be important ORC2, ORC3 and ORC4 stability. This is Leucine-rich repeat and WD repeat-containing protein 1 (LRWD1) from Mus musculus (Mouse).